Consider the following 291-residue polypeptide: 4-diphosphocytidyl-2-C-methyl-D-erythritol kinase (291 aa).

The active site involves lysine 11. 95-105 (PVAAGLAGGSS) is an ATP binding site. Aspartate 137 is a catalytic residue.

This sequence belongs to the GHMP kinase family. IspE subfamily.

It catalyses the reaction 4-CDP-2-C-methyl-D-erythritol + ATP = 4-CDP-2-C-methyl-D-erythritol 2-phosphate + ADP + H(+). It functions in the pathway isoprenoid biosynthesis; isopentenyl diphosphate biosynthesis via DXP pathway; isopentenyl diphosphate from 1-deoxy-D-xylulose 5-phosphate: step 3/6. Catalyzes the phosphorylation of the position 2 hydroxy group of 4-diphosphocytidyl-2C-methyl-D-erythritol. The chain is 4-diphosphocytidyl-2-C-methyl-D-erythritol kinase from Alkaliphilus metalliredigens (strain QYMF).